The sequence spans 441 residues: Interferon-related developmental regulator 2 (441 aa).

The segment covering 1 to 15 (MPRARKGNALRKGGQ) has biased composition (basic residues). The disordered stretch occupies residues 1–51 (MPRARKGNALRKGGQRRGGGARSSTQADSGSSEDEAASEARSTTSDCPSLL).

The protein belongs to the IFRD family. In terms of assembly, associates with ribosomes; promoting ribosome inactivation.

Functionally, ribosome-binding protein that acts as an inhibitor of mRNA translation by promoting ribosome inactivation. Associates with the P- and E-sites of the ribosome and inserts a C-terminal helix into the mRNA exit channel to preclude translation. This is Interferon-related developmental regulator 2 from Mus musculus (Mouse).